Here is a 597-residue protein sequence, read N- to C-terminus: Tubulin polyglutamylase ttll-4 (597 aa).

Positions 1–18 (MSSGYSSAPSVSHTSSEA) are enriched in polar residues. Disordered stretches follow at residues 1–39 (MSSGYSSAPSVSHTSSEADLNRIESYEDGVDEEASDEQR) and 80–107 (SKSKKKKQCPPNITIEKKNGNSSPFLKS). Positions 26–35 (YEDGVDEEAS) are enriched in acidic residues. In terms of domain architecture, TTL spans 134 to 472 (QSRLTWCHNS…HVPPSFDKLH (339 aa)). Residues Lys-250, 256-257 (RG), 278-281 (QHYI), and 291-293 (KFD) contribute to the ATP site. Arg-256 is an a protein binding site. Position 317 (Arg-317) interacts with L-glutamate. Position 338 to 339 (338 to 339 (TN)) interacts with ATP. L-glutamate is bound by residues Tyr-340, Ser-341, and Lys-358. Mg(2+)-binding residues include Asp-418, Glu-431, and Asn-433. Lys-449 provides a ligand contact to L-glutamate.

This sequence belongs to the tubulin--tyrosine ligase family. It depends on Mg(2+) as a cofactor.

The enzyme catalyses L-glutamyl-[protein] + L-glutamate + ATP = gamma-L-glutamyl-L-glutamyl-[protein] + ADP + phosphate + H(+). Functionally, monoglutamylase which modifies tubulin, adding a single glutamate on the gamma-carboxyl group of specific glutamate residues of target proteins. Involved in the side-chain initiation step of the polyglutamylation reaction but not in the elongation step. Preferentially modifies beta-tail tubulin over the alpha-tubulin. Involved in side-chain glutamylation of tubulin in sensory cilia. Together with ttll-5 and ttll-11, required for male mating. This Caenorhabditis briggsae protein is Tubulin polyglutamylase ttll-4 (ttll-4).